Reading from the N-terminus, the 235-residue chain is Sugar fermentation stimulation protein homolog (235 aa).

It belongs to the SfsA family.

The sequence is that of Sugar fermentation stimulation protein homolog from Allorhizobium ampelinum (strain ATCC BAA-846 / DSM 112012 / S4) (Agrobacterium vitis (strain S4)).